Consider the following 237-residue polypeptide: Ribose-5-phosphate isomerase A (237 aa).

Residues 33–36, 88–91, and 101–104 contribute to the substrate site; these read TGST, DGAD, and KGRG. Catalysis depends on Glu-110, which acts as the Proton acceptor. Residue Lys-128 coordinates substrate.

The protein belongs to the ribose 5-phosphate isomerase family. Homodimer.

It carries out the reaction aldehydo-D-ribose 5-phosphate = D-ribulose 5-phosphate. The protein operates within carbohydrate degradation; pentose phosphate pathway; D-ribose 5-phosphate from D-ribulose 5-phosphate (non-oxidative stage): step 1/1. Functionally, catalyzes the reversible conversion of ribose-5-phosphate to ribulose 5-phosphate. In Methanoregula boonei (strain DSM 21154 / JCM 14090 / 6A8), this protein is Ribose-5-phosphate isomerase A.